Consider the following 383-residue polypeptide: Glycoprotein gp2 (383 aa).

Residues M1 to T25 form the signal peptide. Positions T24–T75 are enriched in low complexity. The tract at residues T24–Q136 is disordered. An N-linked (GlcNAc...) asparagine; by host glycan is attached at N48. Residues H81–G91 are compositionally biased toward basic residues. A glycan (N-linked (GlcNAc...) asparagine; by host) is linked at N128. The chain crosses the membrane as a helical span at residues L354 to L371.

It localises to the virion membrane. Functionally, the glycoprotein gp2 from the avirulent strain Kentucky A (KyA) is probably non functional since this strain harbors an in-frame deletion of 1,242 nucleotides in gene 71. This chain is Glycoprotein gp2 (US4), found in Equus caballus (Horse).